The following is a 352-amino-acid chain: Ion-translocating oxidoreductase complex subunit D (352 aa).

A run of 4 helical transmembrane segments spans residues 20 to 40 (IMLL…WFFG), 42 to 62 (GTLF…AIVL), 69 to 91 (VASH…SIPP), and 123 to 143 (PAMI…TSWL). Thr-187 bears the FMN phosphoryl threonine mark. The next 5 membrane-spanning stretches (helical) occupy residues 215–235 (LAGV…VFLL), 242–262 (WHIP…GWLF), 267–287 (LASP…FFIL), 301–321 (LIFG…GGYP), and 322–342 (DGVA…DYYT).

This sequence belongs to the NqrB/RnfD family. In terms of assembly, the complex is composed of six subunits: RsxA, RsxB, RsxC, RsxD, RsxE and RsxG. The cofactor is FMN.

Its subcellular location is the cell inner membrane. Part of a membrane-bound complex that couples electron transfer with translocation of ions across the membrane. Required to maintain the reduced state of SoxR. The sequence is that of Ion-translocating oxidoreductase complex subunit D from Salmonella typhi.